The chain runs to 264 residues: MSKLKLHGFNNLTKSLSFCIYDICYAKTADDRDGYIAYIDEQYNANRLTEILTETCSIIGANILNIARQDYDPQGASVTILVSEEPVDPRDVDTSEHPGPLPSAVVAHLDKSHICVHTYPESHPEGGLCTFRADIEVSTCGVISPLKALNYLIHQLESDIVTMDYRVRGFTRDINGVKHFIDHKINSIQNFMSDDMKSLYHMMDVNVYQENIFHTKMMLKDFDLKHYLFNAKPEELSAEERERITHLLYKEMQEIYYGRNVPEV.

The Schiff-base intermediate with substrate; via pyruvic acid role is filled by Ser-112. Ser-112 carries the post-translational modification Pyruvic acid (Ser); by autocatalysis. His-117 serves as the catalytic Proton acceptor; for processing activity. Residue Cys-140 is the Proton donor; for catalytic activity of the active site.

It belongs to the prokaryotic AdoMetDC family. Type 2 subfamily. As to quaternary structure, heterooctamer of four alpha and four beta chains arranged as a tetramer of alpha/beta heterodimers. It depends on pyruvate as a cofactor. Post-translationally, is synthesized initially as an inactive proenzyme. Formation of the active enzyme involves a self-maturation process in which the active site pyruvoyl group is generated from an internal serine residue via an autocatalytic post-translational modification. Two non-identical subunits are generated from the proenzyme in this reaction, and the pyruvate is formed at the N-terminus of the alpha chain, which is derived from the carboxyl end of the proenzyme. The post-translation cleavage follows an unusual pathway, termed non-hydrolytic serinolysis, in which the side chain hydroxyl group of the serine supplies its oxygen atom to form the C-terminus of the beta chain, while the remainder of the serine residue undergoes an oxidative deamination to produce ammonia and the pyruvoyl group blocking the N-terminus of the alpha chain.

The enzyme catalyses S-adenosyl-L-methionine + H(+) = S-adenosyl 3-(methylsulfanyl)propylamine + CO2. It participates in amine and polyamine biosynthesis; S-adenosylmethioninamine biosynthesis; S-adenosylmethioninamine from S-adenosyl-L-methionine: step 1/1. Its function is as follows. Catalyzes the decarboxylation of S-adenosylmethionine to S-adenosylmethioninamine (dcAdoMet), the propylamine donor required for the synthesis of the polyamines spermine and spermidine from the diamine putrescine. This chain is S-adenosylmethionine decarboxylase proenzyme, found in Yersinia enterocolitica serotype O:8 / biotype 1B (strain NCTC 13174 / 8081).